The chain runs to 41 residues: Submaxillary gland androgen-regulated protein 2, isoform beta (41 aa).

The first 22 residues, 1 to 22, serve as a signal peptide directing secretion; the sequence is MKALYMVFVLWVLIGCFLRLLK.

It is found in the secreted. Its function is as follows. May play a role in protection or detoxification. This is Submaxillary gland androgen-regulated protein 2, isoform beta (Smr2) from Mus musculus (Mouse).